A 720-amino-acid polypeptide reads, in one-letter code: Glycine--tRNA ligase beta subunit (720 aa).

It belongs to the class-II aminoacyl-tRNA synthetase family. Tetramer of two alpha and two beta subunits.

It is found in the cytoplasm. The catalysed reaction is tRNA(Gly) + glycine + ATP = glycyl-tRNA(Gly) + AMP + diphosphate. This chain is Glycine--tRNA ligase beta subunit, found in Acidovorax ebreus (strain TPSY) (Diaphorobacter sp. (strain TPSY)).